A 71-amino-acid polypeptide reads, in one-letter code: Gas vesicle protein A (71 aa).

The tract at residues 12-22 (LAEVIDRILDK) is alpha helix 1. Positions 26–34 (VDAWVRVSL) are beta-strand 1. Positions 35–37 (VGI) are beta turn. The segment at 38 to 46 (ELLAIEARI) is beta-strand 2. The interval 51-70 (VETYLKYAEAVGLTQSAAVP) is alpha helix 2.

The protein belongs to the gas vesicle GvpA family. In terms of assembly, the gas vesicle shell is 2 nm thick and consists of a single layer of this protein. It forms helical ribs nearly perpendicular to the long axis of the vesicle.

The protein localises to the gas vesicle shell. In terms of biological role, gas vesicles are hollow, gas filled proteinaceous nanostructures found in some microorganisms. During planktonic growth they allow positioning of the organism at a favorable depth for light or nutrient acquisition. GvpA forms the protein shell. This chain is Gas vesicle protein A, found in Microchaete diplosiphon (Fremyella diplosiphon).